A 331-amino-acid polypeptide reads, in one-letter code: Type 2 lactosamine alpha-2,3-sialyltransferase (331 aa).

Over 1-4 (MRGY) the chain is Cytoplasmic. Residues 5 to 25 (LVAIFLSAVFLYYVLHCILWG) traverse the membrane as a helical; Signal-anchor for type II membrane protein segment. Residues 26 to 331 (TNVYWAAPVE…KNLVINLTQD (306 aa)) are Lumenal-facing. N129, N181, N282, N295, N308, and N327 each carry an N-linked (GlcNAc...) asparagine glycan.

The protein belongs to the glycosyltransferase 29 family.

Its subcellular location is the golgi apparatus membrane. It catalyses the reaction a neolactoside nLc4Cer(d18:1(4E)) + CMP-N-acetyl-beta-neuraminate = a neolactoside IV(3)-alpha-NeuAc-nLc4Cer(d18:1(4E)) + CMP + H(+). The enzyme catalyses a beta-D-galactosyl-(1-&gt;4)-N-acetyl-beta-D-glucosaminyl derivative + CMP-N-acetyl-beta-neuraminate = an N-acetyl-alpha-neuraminyl-(2-&gt;3)-beta-D-galactosyl-(1-&gt;4)-N-acetyl-beta-D-glucosaminyl derivative + CMP + H(+). The catalysed reaction is a neolactoside nLc6Cer(d18:1(4E)) + CMP-N-acetyl-beta-neuraminate = a neolactoside VI(3)-alpha-NeuNAc-nLc6Cer(d18:1(4E)) + CMP + H(+). In terms of biological role, transfers the sialyl residue from CMP-N-acetyl-beta-neuraminate to the terminal galactose residue on sugar chains of glycoproteins and glycolipids. It's alpha-2,3-sialyltransferase activity is specific toward type II glycan chains (Galbeta1-4GlcNAc) on glycoproteins and glycolipids such as neolactosides nLc4Cer and nLc6Cer, whose sialyl-products serve as precursors for the Lewis X antigen. Critically involved in the synthesis of functional selectin ligands needed for neutrophil recruitment during inflammation and lymphocyte homing to the lymph nodes. This chain is Type 2 lactosamine alpha-2,3-sialyltransferase (ST3GAL6), found in Pongo abelii (Sumatran orangutan).